A 475-amino-acid polypeptide reads, in one-letter code: Nitrogenase vanadium-iron protein beta chain (475 aa).

4 residues coordinate [8Fe-7S] cluster: Cys-31, Cys-56, Cys-115, and Ser-153.

Belongs to the NifD/NifK/NifE/NifN family. Hexamer of two alpha, two beta, and two delta chains. It depends on [8Fe-7S] cluster as a cofactor.

The enzyme catalyses N2 + 8 reduced [2Fe-2S]-[ferredoxin] + 16 ATP + 16 H2O = H2 + 8 oxidized [2Fe-2S]-[ferredoxin] + 2 NH4(+) + 16 ADP + 16 phosphate + 6 H(+). Functionally, this vanadium-iron protein is part of the nitrogenase complex that catalyzes the key enzymatic reactions in nitrogen fixation. The protein is Nitrogenase vanadium-iron protein beta chain (vnfK) of Azotobacter vinelandii.